A 131-amino-acid polypeptide reads, in one-letter code: uncharacterized protein (131 aa).

The segment at 15 to 43 (QLQAEHGSAPSNIASGPSSNQQQQEVQDE) is disordered. Over residues 23-34 (APSNIASGPSSN) the composition is skewed to polar residues.

It belongs to the PDCD5 family.

This is an uncharacterized protein from Schizosaccharomyces pombe (strain 972 / ATCC 24843) (Fission yeast).